Consider the following 69-residue polypeptide: Small integral membrane protein 20 (69 aa).

Over 1 to 8 (MAAARNLR) the chain is Mitochondrial matrix. The helical transmembrane segment at 9-29 (TALIFGGFISMVGAAFYPIYF) threads the bilayer. At 30–69 (RPLMRLEEYQKEQAVNRAGIVQEDVQPPGLKVWSDPFGRK) the chain is on the mitochondrial intermembrane side. A Phenylalanine amide modification is found at F66.

In terms of assembly, component of the MITRAC (mitochondrial translation regulation assembly intermediate of cytochrome c oxidase complex) complex, the core components of this complex being COA3/MITRAC12 and COX14. Interacts with COA3/MITRAC12 and COX4I1. Directly interacts with newly synthesized MT-CO1/COX1. Highly expressed in the hypothalamus, the spinal cord, and sensory ganglia (at protein level). Also expressed on in the epidermis and dermis layers of the skin (at protein level). Expressed in preadipocytes and adipocytes (at protein level). Expressed in the ovary, specifically in granulosa cells of follicles that have passed the primary stage and in oocytes (at protein level).

Its subcellular location is the mitochondrion inner membrane. It is found in the secreted. In terms of biological role, component of the MITRAC (mitochondrial translation regulation assembly intermediate of cytochrome c oxidase complex) complex, that regulates cytochrome c oxidase assembly. Promotes the progression of complex assembly after the association of MT-CO1/COX1 with COX4I1 and COX6C. Chaperone-like assembly factor required to stabilize newly synthesized MT-CO1/COX1 and to prevent its premature turnover. Functionally, peptide involved in a broad spectrum of regulatory functions. Is a ligand for GPR173. As part of the reproductive cycle, it regulates gonadotropin-releasing hormone (GnRH) signaling in the hypothalamus and pituitary gland which augments the release of luteinizing hormone. More specifically, it regulates the expression of transcription factors CEBPB and POU2F1/OCT1 through the cAMP-PKA signaling pathway, which subsequently regulate the expression of GNRHR and KISS1. Plays a protective role in memory retention through activation of GNRHR. Regulates the secretion of AVP by hypothalamic neurons. Plays a role in the transduction of the itch sensation. Induces anxiolytic effects, reducing behavior associated with anxiety. Regulates food intake as well as satiation and satiety by increasing Nucb2 expression in neurons. In the ovary, it regulates follicular growth by stimulating granulosa cell proliferation by increasing the expression of GPR173, CREB1, CYP19A1, KITLG, FSHR, and LHCGR. It also increases the production of estradiol (E2). In the heart, it regulates contractility and relaxation by activating the AKT1-NOS3 and MAPK1-MAPK3 signaling pathways. It also plays a cardioprotective role during ischemia, where it activates the SAFE and RISK pathways. Stimulates the proliferation and differentiation of preadipocytes. In pancreatic islet cells, it induces proliferation of islet cells as well as the production of INS through activation of the MAPK1-MAPK3 signaling pathways. In Mus musculus (Mouse), this protein is Small integral membrane protein 20.